The sequence spans 501 residues: Probable malate:quinone oxidoreductase (501 aa).

It belongs to the MQO family. FAD serves as cofactor.

The enzyme catalyses (S)-malate + a quinone = a quinol + oxaloacetate. It functions in the pathway carbohydrate metabolism; tricarboxylic acid cycle; oxaloacetate from (S)-malate (quinone route): step 1/1. The polypeptide is Probable malate:quinone oxidoreductase (Geobacillus kaustophilus (strain HTA426)).